The chain runs to 490 residues: MTPLYQLTVAQAREMLARGEISSLELTDALLTRIAAVEPKVRAFLVVDAAGARAQARAADARRAAGDASPLLGIPMGIKDVISTQGLRTTCASKMLENYTPVYDATAVARLKAAGAVILGKLNCDEFAMGSSTENSAFQQTRNPWNLERVPGGSSGGSAAAVAAGEAPAALGTDTGGSIRQPAALCGITGLKPTYGRVSRYGLVAFASSLDQIGPMARTVRDCAIVLRVIAGADPFDATCTDYPAPDYEAALTGDIRGLRIGVPREYFVAGMQPDVEAAVRTAIEVLREQGAEVCEISLPHTPYALPVYYLIAPAEASANLARFDGVRYGLRVPGESYFDELERTRGAGFGPEVRRRIMLGTYALSAGYYDAYYKRAQQVRTLIRRDYQQAFEQVDVIAAPTTPTVAFKIGAHTDDPLAMYLEDVCTLPLNLAGLPGLVVPCGFAEGLPIGLQLIGRAFDEESLLRVGDAYQRVTDWHTRMPEVREDGSA.

Active-site charge relay system residues include Lys-79 and Ser-154. Ser-178 (acyl-ester intermediate) is an active-site residue.

It belongs to the amidase family. GatA subfamily. As to quaternary structure, heterotrimer of A, B and C subunits.

The enzyme catalyses L-glutamyl-tRNA(Gln) + L-glutamine + ATP + H2O = L-glutaminyl-tRNA(Gln) + L-glutamate + ADP + phosphate + H(+). In terms of biological role, allows the formation of correctly charged Gln-tRNA(Gln) through the transamidation of misacylated Glu-tRNA(Gln) in organisms which lack glutaminyl-tRNA synthetase. The reaction takes place in the presence of glutamine and ATP through an activated gamma-phospho-Glu-tRNA(Gln). In Roseiflexus castenholzii (strain DSM 13941 / HLO8), this protein is Glutamyl-tRNA(Gln) amidotransferase subunit A.